Reading from the N-terminus, the 530-residue chain is MDSNMMPQTAQQNAVFSKTNFAQQKLGQYQVVAPASPVCSRPGSSCSQPPTLFSNGPAVLTPTGSPPPIGFRPAVMLESEFGDSSYFPSTPPLSTSGSAVGSPKNYEVLQTPLNPMFSGLDGFVGVKSGYESTESSVLDWASCDSPPMTPVFIHSQPSRVPSLSSTTSDLSNISCPSLSPSPAPYARSVSSENDVDFCDPRNLTVPNTSNSSLAPEFTLDCLGEEEGSPSEQSALDTVLSQTAFDFSPAIASGLPAFEELSDFESEDDLSNLVKPGEGSRPRACTGSSIVSLGHGSFIADEDFSFDENDTFQFPSPSPPSSVEAVDDGHKDKRQKKTGTKDSQSAEPVMDTAAADNQTAEVEEQSEQASPVPSESHSSAEADTPSAPLPAPTNRRGRKQSLTEDPSKTFVCDLCNRRFRRQEHLKRHYRSLHTQEKPFECNECGKKFSRSDNLAQHARTHASGGAIVMNIIDNADPSAYEAGMVAPPPVDDYANYGKVLFQIAADVPGSASELSSEEASDNGKKKRKRSE.

2 consecutive C2H2-type zinc fingers follow at residues Phe-409–His-432 and Phe-438–His-460.

It is found in the nucleus. The protein resides in the cytoplasm. Transcription factor that acts as a key downstream transcription factor in the HOG1-MAPK pathway. Plays crucial roles in the regulation of conidiation, virulence and multi-stress responses. In addition to regulating the expression of genes specifically involved in stress-response, conidiation and virulence, controls also expression of cellular signaling factors. This Metarhizium robertsii (strain ARSEF 23 / ATCC MYA-3075) (Metarhizium anisopliae (strain ARSEF 23)) protein is C2H2-type transcription factor MSN2.